Consider the following 395-residue polypeptide: S-adenosylmethionine synthase (395 aa).

An ATP-binding site is contributed by His16. Asp18 provides a ligand contact to Mg(2+). Glu44 is a binding site for K(+). L-methionine contacts are provided by Glu57 and Gln100. The segment at 100–110 (QSPDIAQGVDR) is flexible loop. Residues 167-169 (DAK), 233-234 (RF), Asp242, 248-249 (RK), Ala265, and Lys269 contribute to the ATP site. Asp242 is a binding site for L-methionine. Lys273 is a binding site for L-methionine.

This sequence belongs to the AdoMet synthase family. In terms of assembly, homotetramer; dimer of dimers. It depends on Mg(2+) as a cofactor. K(+) serves as cofactor.

Its subcellular location is the cytoplasm. The enzyme catalyses L-methionine + ATP + H2O = S-adenosyl-L-methionine + phosphate + diphosphate. Its pathway is amino-acid biosynthesis; S-adenosyl-L-methionine biosynthesis; S-adenosyl-L-methionine from L-methionine: step 1/1. Its function is as follows. Catalyzes the formation of S-adenosylmethionine (AdoMet) from methionine and ATP. The overall synthetic reaction is composed of two sequential steps, AdoMet formation and the subsequent tripolyphosphate hydrolysis which occurs prior to release of AdoMet from the enzyme. The protein is S-adenosylmethionine synthase of Burkholderia ambifaria (strain MC40-6).